The following is a 442-amino-acid chain: Putative mannan endo-1,6-alpha-mannosidase C970.02 (442 aa).

An N-terminal signal peptide occupies residues 1 to 19; that stretch reads MSLTIFISLATILFSFAEA. N-linked (GlcNAc...) asparagine glycans are attached at residues Asn-25, Asn-82, Asn-107, Asn-131, Asn-201, Asn-236, Asn-261, Asn-264, Asn-277, and Asn-361.

It belongs to the glycosyl hydrolase 76 family.

It carries out the reaction Random hydrolysis of (1-&gt;6)-alpha-D-mannosidic linkages in unbranched (1-&gt;6)-mannans.. The protein is Putative mannan endo-1,6-alpha-mannosidase C970.02 of Schizosaccharomyces pombe (strain 972 / ATCC 24843) (Fission yeast).